The sequence spans 223 residues: Putative 3-methyladenine DNA glycosylase (223 aa).

Belongs to the DNA glycosylase MPG family.

In Rhodococcus jostii (strain RHA1), this protein is Putative 3-methyladenine DNA glycosylase.